Consider the following 94-residue polypeptide: MICOS complex subunit MIC12 (94 aa).

The chain crosses the membrane as a helical span at residues 7–23 (YGSFSVVASVLGASYYY).

It belongs to the MICOS complex subunit Mic12 family. In terms of assembly, component of the mitochondrial contact site and cristae organizing system (MICOS) complex.

It localises to the mitochondrion inner membrane. In terms of biological role, component of the MICOS complex, a large protein complex of the mitochondrial inner membrane that plays crucial roles in the maintenance of crista junctions, inner membrane architecture, and formation of contact sites to the outer membrane. This Eremothecium gossypii (strain ATCC 10895 / CBS 109.51 / FGSC 9923 / NRRL Y-1056) (Yeast) protein is MICOS complex subunit MIC12 (AIM5).